We begin with the raw amino-acid sequence, 256 residues long: PGL/p-HBAD biosynthesis glycosyltransferase Mb2981 (256 aa).

This sequence belongs to the glycosyltransferase 2 family.

Its function is as follows. Involved in glycosylation steps downstream of mono-O-methyl-glycosyl-p-hydroxybenzoic acid derivative (p-HBAD I) and 2-O-methyl-rhamnosyl-phenolphthiocerol dimycocerosate (mycoside B) during the p-hydroxybenzoic acid derivatives (p-HBAD) and glycosylated phenolphthiocerol dimycocerosates (PGL) biosynthesis. The polypeptide is PGL/p-HBAD biosynthesis glycosyltransferase Mb2981 (Mycobacterium bovis (strain ATCC BAA-935 / AF2122/97)).